Here is a 377-residue protein sequence, read N- to C-terminus: Probable G-protein coupled receptor 27 (377 aa).

Topologically, residues 1–24 (MANASEPGGGGGGAEAAALGLRLA) are extracellular. Asn3 carries N-linked (GlcNAc...) asparagine glycosylation. A helical transmembrane segment spans residues 25–45 (TLSLLLCVSLAGNVLFALLIV). Residues 46 to 56 (RERSLHRAPYY) are Cytoplasmic-facing. The chain crosses the membrane as a helical span at residues 57–77 (LLLDLCLADGLRALACLPAVM). The Extracellular portion of the chain corresponds to 78–98 (LAARRAAAAAGTPPGALGCKL). Cys96 and Cys173 are disulfide-bonded. The helical transmembrane segment at 99-119 (LAFLAALFCFHAAFLLLGVGV) threads the bilayer. The Cytoplasmic portion of the chain corresponds to 120 to 140 (TRYLAIAHHRFYAERLAGWPC). The helical transmembrane segment at 141–161 (AAMLVCAAWALALAAAFPPVL) threads the bilayer. Topologically, residues 162–183 (DGGGADDEDAPCALEQRPDGAP) are extracellular. The helical transmembrane segment at 184 to 204 (GALGFLLLLAAVVGATHLVYL) threads the bilayer. At 205 to 287 (RLLFFIHDRR…FKTEKRLCKM (83 aa)) the chain is on the cytoplasmic side. Residues 288 to 308 (FYAITLLFLLLWGPYVVASYL) traverse the membrane as a helical segment. The Extracellular portion of the chain corresponds to 309-322 (RVLVRPGAVPQAYL). A helical transmembrane segment spans residues 323 to 343 (TASVWLTFAQAGINPVVCFLF). Residues 344-377 (NRELRDCFRAQFPCCQSPQATQATLPCDLKGIGL) lie on the Cytoplasmic side of the membrane.

This sequence belongs to the G-protein coupled receptor 1 family. Expressed as a 3.0 kb transcript, in whole brain, hippocampus, striatum, frontal cortex, thalamus, pons and hypothalamus. A lower molecular weight transcript was detected in all regions examined, except the hypothalamus.

The protein resides in the cell membrane. In terms of biological role, orphan receptor. Possible candidate for amine-like G-protein coupled receptor. This Rattus norvegicus (Rat) protein is Probable G-protein coupled receptor 27 (Gpr27).